Reading from the N-terminus, the 200-residue chain is 3-isopropylmalate dehydratase small subunit (200 aa).

This sequence belongs to the LeuD family. LeuD type 1 subfamily. In terms of assembly, heterodimer of LeuC and LeuD.

It catalyses the reaction (2R,3S)-3-isopropylmalate = (2S)-2-isopropylmalate. Its pathway is amino-acid biosynthesis; L-leucine biosynthesis; L-leucine from 3-methyl-2-oxobutanoate: step 2/4. Functionally, catalyzes the isomerization between 2-isopropylmalate and 3-isopropylmalate, via the formation of 2-isopropylmaleate. This chain is 3-isopropylmalate dehydratase small subunit, found in Aliivibrio fischeri (strain ATCC 700601 / ES114) (Vibrio fischeri).